We begin with the raw amino-acid sequence, 60 residues long: Large ribosomal subunit protein bL33 (60 aa).

The protein belongs to the bacterial ribosomal protein bL33 family.

In Flavobacterium johnsoniae (strain ATCC 17061 / DSM 2064 / JCM 8514 / BCRC 14874 / CCUG 350202 / NBRC 14942 / NCIMB 11054 / UW101) (Cytophaga johnsonae), this protein is Large ribosomal subunit protein bL33.